A 308-amino-acid polypeptide reads, in one-letter code: Apolipoprotein E (308 aa).

The signal sequence occupies residues 1–18 (MKFLWAALVVTLLAGCRA). 8 tandem repeats follow at residues 75 to 96 (LLIE…KQVG), 97 to 118 (PIAQ…ARLE), 119 to 140 (SDME…AALG), 141 to 162 (QNTD…KRLL), 163 to 184 (RDAE…EAAE), 185 to 206 (RGVS…LQAI), 207 to 224 (PPSQ…QKVR), and 225 to 246 (GRLE…DQME). The segment at 75 to 246 (LLIEETMKEV…RLDDMRDQME (172 aa)) is 8 X 22 AA approximate tandem repeats. Residues 153 to 163 (HLRKLRKRLLR) form an LDL and other lipoprotein receptors binding region. 157-160 (LRKR) is a heparin binding site. Positions 205-281 (AIPPSQQLRE…SWFEPLVQDM (77 aa)) are lipid-binding and lipoprotein association. 220–227 (GQKVRGRL) provides a ligand contact to heparin. Positions 257–308 (SQVRLQAEAFQTRLKSWFEPLVQDMQRQWASLVEKVQSTLGISPSTKPSKTK) are homooligomerization. The tract at residues 269 to 281 (RLKSWFEPLVQDM) is specificity for association with VLDL.

The protein belongs to the apolipoprotein A1/A4/E family. As to quaternary structure, homotetramer. May interact with ABCA1; functionally associated with ABCA1 in the biogenesis of HDLs. May interact with APP/A4 amyloid-beta peptide; the interaction is extremely stable in vitro but its physiological significance is unclear. May interact with MAPT. May interact with MAP2. In the cerebrospinal fluid, interacts with secreted SORL1. Interacts with PMEL; this allows the loading of PMEL luminal fragment on ILVs to induce fibril nucleation. Post-translationally, APOE exists as multiple glycosylated and sialylated glycoforms within cells and in plasma. The extent of glycosylation and sialylation are tissue and context specific. In terms of processing, glycated in plasma VLDL. Phosphorylated by FAM20C in the extracellular medium.

The protein resides in the secreted. It is found in the extracellular space. It localises to the extracellular matrix. The protein localises to the extracellular vesicle. Its subcellular location is the endosome. The protein resides in the multivesicular body. APOE is an apolipoprotein, a protein associating with lipid particles, that mainly functions in lipoprotein-mediated lipid transport between organs via the plasma and interstitial fluids. APOE is a core component of plasma lipoproteins and is involved in their production, conversion and clearance. Apolipoproteins are amphipathic molecules that interact both with lipids of the lipoprotein particle core and the aqueous environment of the plasma. As such, APOE associates with chylomicrons, chylomicron remnants, very low density lipoproteins (VLDL) and intermediate density lipoproteins (IDL) but shows a preferential binding to high-density lipoproteins (HDL). It also binds a wide range of cellular receptors including the LDL receptor/LDLR and the very low-density lipoprotein receptor/VLDLR that mediate the cellular uptake of the APOE-containing lipoprotein particles. Finally, APOE also has a heparin-binding activity and binds heparan-sulfate proteoglycans on the surface of cells, a property that supports the capture and the receptor-mediated uptake of APOE-containing lipoproteins by cells. The chain is Apolipoprotein E (APOE) from Pteropus vampyrus (Large flying fox).